The sequence spans 116 residues: MLKDFSRSMRLERSLYKEIAVIIQKNLRDPRLNSFITITEVKLSYDLSYAKVFITFLNYDDKKNIKIILGILQNATGYIRSLLNKKIYLRIVPKLFFVYDTSLINGIFISELIKNI.

Belongs to the RbfA family. Monomer. Binds 30S ribosomal subunits, but not 50S ribosomal subunits or 70S ribosomes.

It is found in the cytoplasm. Its function is as follows. One of several proteins that assist in the late maturation steps of the functional core of the 30S ribosomal subunit. Associates with free 30S ribosomal subunits (but not with 30S subunits that are part of 70S ribosomes or polysomes). Required for efficient processing of 16S rRNA. May interact with the 5'-terminal helix region of 16S rRNA. This chain is Ribosome-binding factor A, found in Buchnera aphidicola subsp. Cinara cedri (strain Cc).